The chain runs to 383 residues: Histidine decarboxylase (383 aa).

A substrate-binding site is contributed by histidine 120. The residue at position 233 (lysine 233) is an N6-(pyridoxal phosphate)lysine.

This sequence belongs to the group II decarboxylase family. Homotetramer. Pyridoxal 5'-phosphate is required as a cofactor.

It carries out the reaction L-histidine + H(+) = histamine + CO2. The sequence is that of Histidine decarboxylase from Acinetobacter baumannii (strain ACICU).